The chain runs to 573 residues: MDYVNILLGLFFTWFLVNGLMSLRRRKISKKLPPGPFPLPIIGNLHLLGNHPHKSLAQLAKIHGPIMNLKLGQLITVVISSSVVAREVLQKQDLTFSNRFVPDVVHVRNHSDFSFVWLPVNSRWRTLRKIMNSSIFSGNKLDGNQHLRSKKVQELIDYCQKCAKNGEAVDIGRATFGTTLNLLSNTIFSKDLTNPFSDSAKEFKELVWNIMVEAWKTQFGGLLSFPLRKFDPQGIKRRMTNYFTKFLGLISGLIDERLKERNLRDNANIDVLDALLNISKRTQKRLTGIKSSSCLVSLFPTPFLPFIIICPFLYLLIFHRCKVSDLNGEGSYVGGRVQLNHTPLQIGCDRLTVSNKPRNYGDSYSSFRTCLQGLILHLNTLEWANGRTTSRIHTLLAKKHKKTISQHICTSKKIKIKKLLEHFLSFGAIVKKNLPIPPGGFSSSLFHVKWRKTLSCLGYIIPKDSQVLVSVWAIGRNSDLWENPLVFKPERFWESEIDIRGRDFELIPFGAGRRICPGLPLAIRMIPVALGSLLNSFNWKLYGGIAPKDLDMEEKFGITLAKAQPLLAIPTPL.

A run of 2 helical transmembrane segments spans residues 3–23 (YVNI…LMSL) and 298–318 (LFPT…LLIF). Position 516 (cysteine 516) interacts with heme.

It belongs to the cytochrome P450 family. Heme is required as a cofactor. As to expression, mostly expressed in flowers and leaves and, at low levels, in roots and stems.

It localises to the endoplasmic reticulum membrane. The enzyme catalyses an omega-methyl-medium-chain fatty acid + reduced [NADPH--hemoprotein reductase] + O2 = an omega-hydroxy-medium-chain fatty acid + oxidized [NADPH--hemoprotein reductase] + H2O + H(+). It carries out the reaction decanoate + reduced [NADPH--hemoprotein reductase] + O2 = 10-hydroxydecanoate + oxidized [NADPH--hemoprotein reductase] + H2O + H(+). It catalyses the reaction dodecanoate + reduced [NADPH--hemoprotein reductase] + O2 = 12-hydroxydodecanoate + oxidized [NADPH--hemoprotein reductase] + H2O + H(+). It participates in lipid metabolism; fatty acid metabolism. Cytochrome P450 hydroxylase catalyzing the conversion of decanoate (capric acid) and dodecanoate (lauric acid) to their corresponding omega-hydroxy metabolites, 10-hydroxydecanoate and 12-hydroxydodecanoate, respectively; these hydroxylated components affect plant growth, including reducing root elongation. In Petunia hybrida (Petunia), this protein is Lauric acid 10-hydroxylase.